A 428-amino-acid polypeptide reads, in one-letter code: Histidinol dehydrogenase (428 aa).

NAD(+) is bound by residues tyrosine 124, glutamine 186, and asparagine 209. Substrate-binding residues include serine 233, glutamine 255, and histidine 258. Zn(2+) is bound by residues glutamine 255 and histidine 258. Catalysis depends on proton acceptor residues glutamate 322 and histidine 323. Substrate is bound by residues histidine 323, aspartate 356, glutamate 410, and histidine 415. Aspartate 356 contributes to the Zn(2+) binding site. A Zn(2+)-binding site is contributed by histidine 415.

Belongs to the histidinol dehydrogenase family. The cofactor is Zn(2+).

It carries out the reaction L-histidinol + 2 NAD(+) + H2O = L-histidine + 2 NADH + 3 H(+). It functions in the pathway amino-acid biosynthesis; L-histidine biosynthesis; L-histidine from 5-phospho-alpha-D-ribose 1-diphosphate: step 9/9. In terms of biological role, catalyzes the sequential NAD-dependent oxidations of L-histidinol to L-histidinaldehyde and then to L-histidine. In Bacteroides fragilis (strain YCH46), this protein is Histidinol dehydrogenase.